We begin with the raw amino-acid sequence, 885 residues long: Phycobiliprotein ApcE (885 aa).

Position 185 (cysteine 185) interacts with (2R,3E)-phycocyanobilin. PBS-linker domains lie at aspartate 242–valine 422, lysine 498–lysine 680, and asparagine 694–serine 871.

The protein belongs to the phycobilisome linker protein family. Post-translationally, contains one covalently linked bilin chromophore. This protein autochromophorylates (Potential).

The protein localises to the plastid. The protein resides in the chloroplast thylakoid membrane. Functionally, this protein is postulated to act both as terminal energy acceptor and as a linker polypeptide that stabilizes the phycobilisome architecture. May have intrinsic bilin lyase activity. The sequence is that of Phycobiliprotein ApcE (apcE) from Aglaothamnion neglectum (Red alga).